The primary structure comprises 220 residues: Iron-sulfur cluster repair protein YtfE (220 aa).

The protein belongs to the RIC family. YtfE subfamily. In terms of assembly, homodimer.

The protein resides in the cytoplasm. In terms of biological role, di-iron-containing protein involved in the repair of iron-sulfur clusters damaged by oxidative and nitrosative stress conditions. This Escherichia coli (strain SMS-3-5 / SECEC) protein is Iron-sulfur cluster repair protein YtfE.